The chain runs to 430 residues: T-kininogen 1 (430 aa).

An N-terminal signal peptide occupies residues 1 to 18 (MKLITILLLCSRLLPSLA). Position 19 is a pyrrolidone carboxylic acid (glutamine 19). Positions 28–131 (CNDETVFQAV…TQICNITPGK (104 aa)) constitute a Cystatin kininogen-type 1 domain. 9 disulfide bridges follow: cysteine 28-cysteine 404, cysteine 83-cysteine 94, cysteine 107-cysteine 125, cysteine 141-cysteine 144, cysteine 205-cysteine 217, cysteine 228-cysteine 247, cysteine 263-cysteine 266, cysteine 327-cysteine 339, and cysteine 350-cysteine 369. Asparagine 82 carries N-linked (GlcNAc...) asparagine glycosylation. Residues 150–253 (MDSSDLKPVL…SQSCDLYPGD (104 aa)) form the Cystatin kininogen-type 2 domain. 2 N-linked (GlcNAc...) asparagine glycosylation sites follow: asparagine 168 and asparagine 204. Residues 272-375 (VDSPELKEAL…TVRCQALDMM (104 aa)) enclose the Cystatin kininogen-type 3 domain. Asparagine 326 carries an N-linked (GlcNAc...) asparagine glycan. A disordered region spans residues 411-430 (SKARAGPAPDHQAEASTVTP).

In terms of processing, as T-kinin is preceded by a Met instead of an Arg or Lys, it is not released from its precursor by either tissue or plasma kallikrein. In terms of tissue distribution, plasma.

The protein localises to the secreted. It is found in the extracellular space. Kininogens are plasma glycoproteins with a number of functions: (1) as precursor of the active peptide bradykinin they effect smooth muscle contraction, induction of hypotension and increase of vascular permeability. (2) They play a role in blood coagulation by helping to position optimally prekallikrein and factor XI next to factor XII. (3) They are inhibitor of thiol proteases. This chain is T-kininogen 1 (Map1), found in Rattus norvegicus (Rat).